Reading from the N-terminus, the 110-residue chain is Large ribosomal subunit protein uL22 (110 aa).

Belongs to the universal ribosomal protein uL22 family. In terms of assembly, part of the 50S ribosomal subunit.

Its function is as follows. This protein binds specifically to 23S rRNA; its binding is stimulated by other ribosomal proteins, e.g. L4, L17, and L20. It is important during the early stages of 50S assembly. It makes multiple contacts with different domains of the 23S rRNA in the assembled 50S subunit and ribosome. Functionally, the globular domain of the protein is located near the polypeptide exit tunnel on the outside of the subunit, while an extended beta-hairpin is found that lines the wall of the exit tunnel in the center of the 70S ribosome. This is Large ribosomal subunit protein uL22 from Syntrophus aciditrophicus (strain SB).